The primary structure comprises 386 residues: Benzoyl-CoA reductase subunit C (386 aa).

It belongs to the FldB/FldC dehydratase alpha/beta subunit family. Heterotetramer composed of A, B, C, and D subunits. Iron-sulfur cluster is required as a cofactor. The cofactor is an oxidized flavin.

The catalysed reaction is cyclohexa-1,5-diene-1-carbonyl-CoA + oxidized 2[4Fe-4S]-[ferredoxin] + 2 ADP + 2 phosphate = reduced 2[4Fe-4S]-[ferredoxin] + benzoyl-CoA + 2 ATP + 2 H2O. It carries out the reaction 3-hydroxybenzoyl-CoA + AH2 + 2 ATP + 2 H2O = 3-hydroxycyclohexa-1,5-diene-1-carbonyl-CoA + A + 2 ADP + 2 phosphate + 2 H(+). Functionally, catalyzes the anaerobic reduction of benzoyl-CoA and 3-hydroxybenzoyl-CoA to form cyclohexa-1,5-diene-1-carbonyl-CoA and 3-hydroxycyclohexa-1,5-diene-1-carbonyl-CoA, respectively. The enzyme also reduces other benzoyl-CoA analogs with small substituents at the aromatic ring. This chain is Benzoyl-CoA reductase subunit C (bcrC), found in Thauera aromatica.